Here is a 717-residue protein sequence, read N- to C-terminus: Fatty acid oxidation complex subunit alpha (717 aa).

Residues 1 to 190 (MIHAGNAITV…KDGAVDAVVS (190 aa)) form an enoyl-CoA hydratase/isomerase region. Residue Asp-298 participates in substrate binding. Positions 313–717 (HPVNQAAVLG…MAENNKKFYG (405 aa)) are 3-hydroxyacyl-CoA dehydrogenase. NAD(+) is bound by residues Met-326, Asp-345, 402–404 (VTE), Lys-409, and Ser-431. The active-site For 3-hydroxyacyl-CoA dehydrogenase activity is His-452. Asn-455 provides a ligand contact to NAD(+). Asn-502 contributes to the substrate binding site.

This sequence in the N-terminal section; belongs to the enoyl-CoA hydratase/isomerase family. In the C-terminal section; belongs to the 3-hydroxyacyl-CoA dehydrogenase family. In terms of assembly, heterotetramer of two alpha chains (FadB) and two beta chains (FadA).

It carries out the reaction a (3S)-3-hydroxyacyl-CoA + NAD(+) = a 3-oxoacyl-CoA + NADH + H(+). It catalyses the reaction a (3S)-3-hydroxyacyl-CoA = a (2E)-enoyl-CoA + H2O. The enzyme catalyses a 4-saturated-(3S)-3-hydroxyacyl-CoA = a (3E)-enoyl-CoA + H2O. The catalysed reaction is (3S)-3-hydroxybutanoyl-CoA = (3R)-3-hydroxybutanoyl-CoA. It carries out the reaction a (3Z)-enoyl-CoA = a 4-saturated (2E)-enoyl-CoA. It catalyses the reaction a (3E)-enoyl-CoA = a 4-saturated (2E)-enoyl-CoA. It functions in the pathway lipid metabolism; fatty acid beta-oxidation. Functionally, involved in the aerobic and anaerobic degradation of long-chain fatty acids via beta-oxidation cycle. Catalyzes the formation of 3-oxoacyl-CoA from enoyl-CoA via L-3-hydroxyacyl-CoA. It can also use D-3-hydroxyacyl-CoA and cis-3-enoyl-CoA as substrate. The protein is Fatty acid oxidation complex subunit alpha of Acinetobacter baylyi (strain ATCC 33305 / BD413 / ADP1).